The primary structure comprises 179 residues: Large ribosomal subunit protein uL6 (179 aa).

Belongs to the universal ribosomal protein uL6 family. Part of the 50S ribosomal subunit.

Its function is as follows. This protein binds to the 23S rRNA, and is important in its secondary structure. It is located near the subunit interface in the base of the L7/L12 stalk, and near the tRNA binding site of the peptidyltransferase center. The chain is Large ribosomal subunit protein uL6 from Mycobacterium tuberculosis (strain ATCC 25618 / H37Rv).